Here is a 681-residue protein sequence, read N- to C-terminus: Transketolase 2 (681 aa).

Position 30 (His30) interacts with substrate. Thiamine diphosphate is bound by residues His69 and 116-118 (GPL). Asp157 contacts Mg(2+). 2 residues coordinate thiamine diphosphate: Gly158 and Asn187. Positions 187 and 189 each coordinate Mg(2+). The substrate site is built by His263, Arg359, and Ser386. His263 is a thiamine diphosphate binding site. Thiamine diphosphate is bound by residues Glu418 and Phe445. Residue Glu418 is the Proton donor of the active site. Substrate is bound by residues His469, Asp477, and Arg528.

It belongs to the transketolase family. As to quaternary structure, homodimer. Mg(2+) is required as a cofactor. It depends on Ca(2+) as a cofactor. The cofactor is Mn(2+). Co(2+) serves as cofactor. Requires thiamine diphosphate as cofactor.

It catalyses the reaction D-sedoheptulose 7-phosphate + D-glyceraldehyde 3-phosphate = aldehydo-D-ribose 5-phosphate + D-xylulose 5-phosphate. Catalyzes the transfer of a two-carbon ketol group from a ketose donor to an aldose acceptor, via a covalent intermediate with the cofactor thiamine pyrophosphate. The protein is Transketolase 2 (TKL2) of Saccharomyces cerevisiae (strain ATCC 204508 / S288c) (Baker's yeast).